A 224-amino-acid chain; its full sequence is UPF0758 protein PSPA7_6095 (224 aa).

An MPN domain is found at V102–M224. Residues H173, H175, and D186 each coordinate Zn(2+). The short motif at H173–D186 is the JAMM motif element.

This sequence belongs to the UPF0758 family.

The chain is UPF0758 protein PSPA7_6095 from Pseudomonas paraeruginosa (strain DSM 24068 / PA7) (Pseudomonas aeruginosa (strain PA7)).